An 842-amino-acid polypeptide reads, in one-letter code: Taste receptor type 1 member 1 (842 aa).

The N-terminal stretch at 1–19 (MLFWAAHLLLSLQLAVAYC) is a signal peptide. Residues 20–568 (WAFSCQRTES…EFLGWHEPIS (549 aa)) are Extracellular-facing. Residues asparagine 88, asparagine 89, asparagine 96, asparagine 136, asparagine 292, asparagine 480, and asparagine 530 are each glycosylated (N-linked (GlcNAc...) asparagine). Residues 569 to 589 (LVLLAANTLLLLLLIGTAGLF) form a helical membrane-spanning segment. Residues 590–604 (AWRLHTPVVRSAGGR) are Cytoplasmic-facing. Residues 605–625 (LCFLMLGSLVAGSCSLYSFFG) traverse the membrane as a helical segment. The Extracellular portion of the chain corresponds to 626 to 640 (KPTVPACLLRQPLFS). Residues 641-661 (LGFAIFLSCLTIRSFQLVIIF) form a helical membrane-spanning segment. The Cytoplasmic portion of the chain corresponds to 662-681 (KFSTKVPTFYHTWAQNHGAG). A helical membrane pass occupies residues 682–702 (IFVIVSSTVHLFLCLTWLAMW). Residues 703–725 (TPRPTREYQRFPHLVILECTEVN) lie on the Extracellular side of the membrane. A helical transmembrane segment spans residues 726 to 746 (SVGFLVAFAHNILLSISTFVC). At 747–762 (SYLGKELPENYNEAKC) the chain is on the cytoplasmic side. A helical transmembrane segment spans residues 763–783 (VTFSLLLHFVSWIAFFTMSSI). Residues 784-789 (YQGSYL) lie on the Extracellular side of the membrane. The helical transmembrane segment at 790–810 (PAVNVLAGLATLSGGFSGYFL) threads the bilayer. At 811–842 (PKCYVILCRPELNNTEHFQASIQDYTRRCGTT) the chain is on the cytoplasmic side.

This sequence belongs to the G-protein coupled receptor 3 family. TAS1R subfamily. As to quaternary structure, forms heterodimers with TAS1R3. As to expression, expressed strongly only in fungiform papillae.

The protein localises to the cell membrane. Its function is as follows. Putative taste receptor. TAS1R1/TAS1R3 responds to the umami taste stimulus (the taste of monosodium glutamate) and also to most of the 20 standard L-amino acids, but not to their D-enantiomers or other compounds. Sequence differences within and between species can significantly influence the selectivity and specificity of taste responses. In Mus musculus (Mouse), this protein is Taste receptor type 1 member 1 (Tas1r1).